The chain runs to 105 residues: Nucleoid-associated protein ABO_1774 (105 aa).

The disordered stretch occupies residues 85 to 105 (QQQDSMQNMAGGFPFPPGFKP).

This sequence belongs to the YbaB/EbfC family. In terms of assembly, homodimer.

It localises to the cytoplasm. It is found in the nucleoid. Binds to DNA and alters its conformation. May be involved in regulation of gene expression, nucleoid organization and DNA protection. The sequence is that of Nucleoid-associated protein ABO_1774 from Alcanivorax borkumensis (strain ATCC 700651 / DSM 11573 / NCIMB 13689 / SK2).